A 2322-amino-acid chain; its full sequence is Protein sidekick homolog (2322 aa).

The first 26 residues, 1–26 (MNYRIFLLFCTTTVLWSVVSTQLVLG), serve as a signal peptide directing secretion. The Extracellular portion of the chain corresponds to 27-2020 (KPPIFQNTGP…IPDDPFYTTW (1994 aa)). 3 Ig-like C2-type domains span residues 28-105 (PPIF…AAIS), 217-319 (PSLQ…AYLT), and 324-397 (PVLK…ADMS). Disulfide bonds link Cys52/Cys94, Cys247/Cys301, and Cys345/Cys386. The N-linked (GlcNAc...) asparagine glycan is linked to Asn408. 2 Ig-like C2-type domains span residues 450-545 (PFTS…VQVN) and 548-639 (SLIE…AMLQ). Intrachain disulfides connect Cys481–Cys529 and Cys569–Cys623. N-linked (GlcNAc...) asparagine glycosylation is found at Asn633 and Asn656. Fibronectin type-III domains lie at 646-752 (MPER…MPQQ), 757-854 (APRN…TAEG), 859-958 (APKN…TEED), 962-1056 (AVDE…VPPE), 1060-1155 (RPSM…TLQT), 1160-1255 (PSQR…TYES), 1260-1360 (SPRN…TLED), 1364-1458 (PPES…SSVR), 1464-1567 (APAP…TLPS), 1572-1672 (QPIS…VGYS), 1674-1774 (PKRN…LEDK), 1777-1873 (PVGV…SKDG), and 1908-2010 (QAKR…VPES). Residues 732-762 (SNKHGPGKPSLPSSSVTMPQQPPSAAPRNVA) form a disordered region. 4 N-linked (GlcNAc...) asparagine glycosylation sites follow: Asn808, Asn869, Asn933, and Asn1017. The span at 1040–1049 (GDGPVEETKF) shows a compositional bias: basic and acidic residues. Residues 1040–1060 (GDGPVEETKFESGVPPELPGR) are disordered. Asn1108 is a glycosylation site (N-linked (GlcNAc...) asparagine). The tract at residues 1139-1163 (GRGAPSEPSRTFETLQTNPETPSQR) is disordered. Positions 1146-1163 (PSRTFETLQTNPETPSQR) are enriched in polar residues. Asn1615, Asn1677, and Asn1864 each carry an N-linked (GlcNAc...) asparagine glycan. Residues 1916–1965 (EETENGYVSQRPRRNEIRGAKSAAQTSASSNSNRPTHPIGEWITLRPTDG) are disordered. Positions 1935–1947 (AKSAAQTSASSNS) are enriched in low complexity. Residues 2021-2041 (WFMALVAMAAFVLIVIIIAIL) form a helical membrane-spanning segment. Topologically, residues 2042 to 2322 (CVTGSSAKYR…NLTAGFSSFV (281 aa)) are cytoplasmic. 3 disordered regions span residues 2081–2114 (NMTR…SVLG), 2167–2254 (YVVS…ADDI), and 2276–2322 (MVRA…SSFV). Residues 2092–2101 (PGTTQSWLSD) are compositionally biased toward polar residues. Over residues 2207–2223 (PSSSGGSQPQGSPQQQQ) the composition is skewed to low complexity. Residues 2227 to 2238 (DSFDEEDDVDDD) are compositionally biased toward acidic residues. Composition is skewed to polar residues over residues 2282–2302 (LTNQ…STSE) and 2310–2322 (ATPN…SSFV).

This sequence belongs to the sidekick family.

It localises to the membrane. Functionally, cell adhesion protein. The sequence is that of Protein sidekick homolog (rig-4) from Caenorhabditis briggsae.